Consider the following 130-residue polypeptide: Holo-[acyl-carrier-protein] synthase (130 aa).

2 residues coordinate Mg(2+): aspartate 9 and glutamate 58.

This sequence belongs to the P-Pant transferase superfamily. AcpS family. The cofactor is Mg(2+).

The protein resides in the cytoplasm. It catalyses the reaction apo-[ACP] + CoA = holo-[ACP] + adenosine 3',5'-bisphosphate + H(+). Functionally, transfers the 4'-phosphopantetheine moiety from coenzyme A to a Ser of acyl-carrier-protein. The sequence is that of Holo-[acyl-carrier-protein] synthase from Mycobacterium sp. (strain JLS).